Here is a 90-residue protein sequence, read N- to C-terminus: MVKNSFIPVLSQEKKGKNPGLVEFQIFQFTNRIRRLTSHFELHPKDYSSQTGLRKILGKRQRLLSYLSKKDGIQYKKLINQFDIRQSQIR.

This sequence belongs to the universal ribosomal protein uS15 family. Part of the 30S ribosomal subunit.

The protein resides in the plastid. Its subcellular location is the chloroplast. The protein is Small ribosomal subunit protein uS15c (rps15) of Phaseolus vulgaris (Kidney bean).